Consider the following 349-residue polypeptide: Insulin gene enhancer protein ISL-1 (349 aa).

LIM zinc-binding domains are found at residues 17-70 (CVGC…CKRD) and 79-133 (CAKC…RADH). Positions 181-240 (TTRVRTVLNEKQLHTLRTCYAANPRPDALMKEQLVEMTGLSPRVIRVWFQNKRCKDKKRS) form a DNA-binding region, homeobox. The segment at 262–291 (GTPMVAASPERHDGGLQANPVEVQSYQPPW) is LIM-binding domain (LID). Residues 312-349 (VNFSEGGPGSNSTGSEVASMSSQLPDTPNSMVASPIEA) are disordered. Over residues 321-343 (SNSTGSEVASMSSQLPDTPNSMV) the composition is skewed to polar residues.

As to quaternary structure, at neuronal promoters, displaces LDB1 from LHX3 LIM domain to form a ternary complex in which ISL1 contacts both LHX3 and LDB1; allosteric structural changes in the DNA binding domain of LHX3, induced by the ISL1:LHX3 interaction, may explain differences in sequence specificity of the different complexes. Interacts with LHX3. Interacts (via C-terminus) with POU4F2 (via C-terminus) isoform 1. Interacts with POU3F2. Interacts with POU4F3. Interacts (via N-terminal domain) with MLIP; the interaction represses ISL1 transactivator activity. Interacts with GCN5/KAT2A. Interactions of ISL1 with MLIP1 or KAT2A may be mutually exclusive. Post-translationally, ubiquitinated probably by WWP1 E3 ubiquitin ligase; ubiquitination is followed by protein degradation. In terms of processing, phosphorylated. Expressed in subsets of neurons of the adrenal medulla and dorsal root ganglion, inner nuclear and ganglion cell layers in the retina, the pineal and some regions of the brain.

Its subcellular location is the nucleus. DNA-binding transcriptional activator. Recognizes and binds to the consensus octamer binding site 5'-ATAATTAA-3' in promoter of target genes. Plays a fundamental role in the gene regulatory network essential for retinal ganglion cell (RGC) differentiation. Cooperates with the transcription factor POU4F2 to achieve maximal levels of expression of RGC target genes and RGC fate specification in the developing retina. Involved in the specification of motor neurons in cooperation with LHX3 and LDB1. Binds to insulin gene enhancer sequences. Essential for heart development. Marker of one progenitor cell population that give rise to the outflow tract, right ventricle, a subset of left ventricular cells, and a large number of atrial cells as well, its function is required for these progenitors to contribute to the heart. Controls the expression of FGF and BMP growth factors in this cell population and is required for proliferation and survival of cells within pharyngeal foregut endoderm and adjacent splanchnic mesoderm as well as for migration of cardiac progenitors into the heart. The chain is Insulin gene enhancer protein ISL-1 (ISL1) from Homo sapiens (Human).